The primary structure comprises 279 residues: uncharacterized protein (279 aa).

The HTH rpiR-type domain maps to 1–77 (MGILEQLENP…VTLAKEISNK (77 aa)). The segment at residues 37-56 (ISIIAKESGVGEATITRFTK) is a DNA-binding region (H-T-H motif). The region spanning 123–263 (CRDLIMNAKR…YTEVIKEMFS (141 aa)) is the SIS domain.

This is an uncharacterized protein from Clostridium perfringens (strain 13 / Type A).